Reading from the N-terminus, the 330-residue chain is RNA polymerase sigma factor RpoS (330 aa).

Residues 56-89 form a sigma-70 factor domain-1 region; it reads DATQLYLGEIGYSPLLTAEEEVYFARRALRGDVA. Residues 94–164 form a sigma-70 factor domain-2 region; it reads MIESNLRLVV…ERAIMNQTRT (71 aa). Positions 118–121 match the Interaction with polymerase core subunit RpoC motif; sequence DLIE. The segment at 174–249 is sigma-70 factor domain-3; sequence ELNVYLRTAR…DEKENGPEDT (76 aa). The segment at 262–315 is sigma-70 factor domain-4; sequence WLFELNAKQREVLARRFGLLGYEAATLEDVGREIGLTRERVRQIQVEGLRRLRE. Positions 288 to 307 form a DNA-binding region, H-T-H motif; the sequence is LEDVGREIGLTRERVRQIQV.

The protein belongs to the sigma-70 factor family. RpoS subfamily. Interacts with the RNA polymerase core enzyme.

The protein resides in the cytoplasm. Sigma factors are initiation factors that promote the attachment of RNA polymerase to specific initiation sites and are then released. This sigma factor is the master transcriptional regulator of the stationary phase and the general stress response. The chain is RNA polymerase sigma factor RpoS from Shigella flexneri.